The sequence spans 376 residues: CCA-adding enzyme (376 aa).

ATP is bound by residues G23 and R26. G23 and R26 together coordinate CTP. Mg(2+) is bound by residues E36 and D38. The ATP site is built by R106, R152, and R155. The CTP site is built by R106, R152, and R155.

It belongs to the tRNA nucleotidyltransferase/poly(A) polymerase family. Bacterial CCA-adding enzyme type 2 subfamily. Mg(2+) serves as cofactor.

It carries out the reaction a tRNA precursor + 2 CTP + ATP = a tRNA with a 3' CCA end + 3 diphosphate. The enzyme catalyses a tRNA with a 3' CCA end + 2 CTP + ATP = a tRNA with a 3' CCACCA end + 3 diphosphate. Functionally, catalyzes the addition and repair of the essential 3'-terminal CCA sequence in tRNAs without using a nucleic acid template. Adds these three nucleotides in the order of C, C, and A to the tRNA nucleotide-73, using CTP and ATP as substrates and producing inorganic pyrophosphate. tRNA 3'-terminal CCA addition is required both for tRNA processing and repair. Also involved in tRNA surveillance by mediating tandem CCA addition to generate a CCACCA at the 3' terminus of unstable tRNAs. While stable tRNAs receive only 3'-terminal CCA, unstable tRNAs are marked with CCACCA and rapidly degraded. In Coxiella burnetii (strain RSA 331 / Henzerling II), this protein is CCA-adding enzyme.